Reading from the N-terminus, the 149-residue chain is Large ribosomal subunit protein uL22c (149 aa).

The protein belongs to the universal ribosomal protein uL22 family. In terms of assembly, part of the 50S ribosomal subunit.

It localises to the plastid. The protein resides in the chloroplast. In terms of biological role, this protein binds specifically to 23S rRNA. Its function is as follows. The globular domain of the protein is located near the polypeptide exit tunnel on the outside of the subunit, while an extended beta-hairpin is found that lines the wall of the exit tunnel in the center of the 70S ribosome. This is Large ribosomal subunit protein uL22c (rpl22) from Hordeum vulgare (Barley).